The chain runs to 129 residues: Follitropin subunit beta (129 aa).

The first 18 residues, 1 to 18 (MKSVQFCFLFCCWRVICC), serve as a signal peptide directing secretion. Cystine bridges form between C21–C69, C35–C84, C38–C122, C46–C100, C50–C102, and C105–C112. 2 N-linked (GlcNAc...) asparagine glycosylation sites follow: N25 and N42.

The protein belongs to the glycoprotein hormones subunit beta family. As to quaternary structure, heterodimer. The active follitropin is a heterodimer composed of an alpha chain/CGA shared with other hormones and a unique beta chain/FSHB shown here.

The protein localises to the secreted. In terms of biological role, together with the alpha chain CGA constitutes follitropin, the follicle-stimulating hormone, and provides its biological specificity to the hormone heterodimer. Binds FSHR, a G protein-coupled receptor, on target cells to activate downstream signaling pathways. Follitropin is involved in follicle development and spermatogenesis in reproductive organs. The chain is Follitropin subunit beta (FSHB) from Panthera tigris altaica (Siberian tiger).